The chain runs to 518 residues: MTDDRSTDERRTADRDFEVDLDDVLDDEDDDEGLFDDLLSGEPIFENKEVLRPSYTPHELPHRNDQINNMATILVAALRGETPSNILIYGKTGTGKTASAKFVSQELEKTSKKYDVPCEVEYINCEVTDTQYRVLAQLANTFIDQNRAFVDARIADLSDLRAQADDDPNALEIGGSPGDDRTGNESSEGSDVSDSFSDLRERFDSVAEIDDRIDSLEADKAEMEQVPMTGWPTDRVYATFFDAVDYVERVAVIMLDEIDKLVEKSGDDTLYNLSRMNSELDNSRVSIIGISNDLKFTDFLDPRVKSSLGEEEIVFPPYDANQLRDILQHRSDVAFKADALSDDVLPLCAAFAAQEHGDARRALDLLRTAGELAERDQAENVTEDHVRRAQDKIELDRVVEVVRTLPTQSKLVLYAILLLEDNGVHNVNTGEVYNIYKTLCDELDADVLTQRRVTDLISELDMLGIVNAVVVSKGRYGRTKEISLSVPVEETEAVLEADSRLSDIEDITPFVQARFENN.

Residue 94 to 98 (TGKTA) coordinates ATP. Residues 165–196 (DDDPNALEIGGSPGDDRTGNESSEGSDVSDSF) are disordered. Residues 186-196 (SSEGSDVSDSF) are compositionally biased toward low complexity. Residues Tyr-318 and Arg-330 each contribute to the ATP site.

It belongs to the CDC6/cdc18 family.

Its function is as follows. Involved in regulation of DNA replication. Required to initiate DNA replication of the circular chromosome at a nearby autonomously replicating sequence (ARS) oriC1. This is ORC1-type DNA replication protein 7 (orc7) from Halobacterium salinarum (strain ATCC 700922 / JCM 11081 / NRC-1) (Halobacterium halobium).